Here is a 100-residue protein sequence, read N- to C-terminus: Large ribosomal subunit protein eL21 (100 aa).

This sequence belongs to the eukaryotic ribosomal protein eL21 family.

This is Large ribosomal subunit protein eL21 from Pyrobaculum aerophilum (strain ATCC 51768 / DSM 7523 / JCM 9630 / CIP 104966 / NBRC 100827 / IM2).